Here is a 389-residue protein sequence, read N- to C-terminus: MSLLGARSTYRWFSIAASIPTKNAIGKSTYLLASRNQQYRGIITSTVDWKPIKTGKSPNDDSRRERSFGKKIVLGLMFAMPIISFYLGTWQVRRLKWKTKLIAACETKLTYEPIPLPKSFTPDMCEDWEYRKVILTGHFLHNEEMFVGPRKKNGEKGYFLFTPFIRDDTGEKVLIERGWISEEKVAPDSRNLHHLSLPQEEHLKVVCLVRPPKKRGSLQWAKKDPNSRLWQVPDIYDMARSSGCTPIQFQALYDMKDHPIIEEHTRNEASQNNSTSSLWKFWKREPTTAVNGTQAVDNNTSKPRSRQEMPTDQTIEFDERQFIKAGVPIGRKPTIDLKNNHLQYLVTWYGLSFLSTIFLIVALRKAKRGGVVSQDQLMKEKLKHSRKYM.

Residues 1–71 are Mitochondrial matrix-facing; it reads MSLLGARSTY…SRRERSFGKK (71 aa). The chain crosses the membrane as a helical span at residues 72–92; it reads IVLGLMFAMPIISFYLGTWQV. Topologically, residues 93–341 are mitochondrial intermembrane; it reads RRLKWKTKLI…KPTIDLKNNH (249 aa). The segment at 292 to 311 is disordered; it reads GTQAVDNNTSKPRSRQEMPT. The chain crosses the membrane as a helical span at residues 342–362; sequence LQYLVTWYGLSFLSTIFLIVA. The Mitochondrial matrix portion of the chain corresponds to 363 to 389; that stretch reads LRKAKRGGVVSQDQLMKEKLKHSRKYM.

It belongs to the SURF1 family. Interacts with COA1, COX14 and MSS51.

It localises to the mitochondrion inner membrane. Its function is as follows. Required for efficient assembly of cytochrome c oxidase in the mitochondrial inner membrane. Involved in a step that couples MSS51-COX14-dependent regulation of COX1 translation to early steps of cytochrome c oxidase assembly. The protein is Cytochrome oxidase assembly protein SHY1 (SHY1) of Saccharomyces cerevisiae (strain ATCC 204508 / S288c) (Baker's yeast).